An 805-amino-acid polypeptide reads, in one-letter code: Ubiquitin carboxyl-terminal hydrolase 10 (805 aa).

The tract at residues 139–170 (DGSGNADSDGTSGTGQRERKKKKKRPPGYYSY) is disordered. A compositionally biased stretch (polar residues) spans 143–153 (NADSDGTSGTG). Residues 422–802 (RGLINKGNWC…TAYLLYYRRV (381 aa)) form the USP domain. C431 acts as the Nucleophile in catalysis. The interval 561–593 (HINNGPDPVSEKEEINKDEQEGSDEEWEQVGPR) is disordered. Residues 569–580 (VSEKEEINKDEQ) are compositionally biased toward basic and acidic residues. Residue H756 is the Proton acceptor of the active site.

The protein belongs to the peptidase C19 family. USP10 subfamily.

It is found in the cytoplasm. The protein resides in the nucleus. The enzyme catalyses Thiol-dependent hydrolysis of ester, thioester, amide, peptide and isopeptide bonds formed by the C-terminal Gly of ubiquitin (a 76-residue protein attached to proteins as an intracellular targeting signal).. Its function is as follows. Hydrolase that can remove conjugated ubiquitin from target proteins such as p53/tp53, rps2/us5, rps3/us3, rps10/eS10, becn1, snx3 and cftr. Acts as an essential regulator of p53/tp53 stability: in unstressed cells, specifically deubiquitinates p53/tp53 in the cytoplasm, leading to counteracts MDM2 action and stabilize p53/tp53. Following DNA damage, translocates to the nucleus and deubiquitinates p53/tp53, leading to regulate the p53/TP53-dependent DNA damage response. Component of a regulatory loop that controls autophagy and p53/tp53 levels. Plays a key role in 40S ribosome subunit recycling when a ribosome has stalled during translation: acts both by inhibiting formation of stress granules, which store stalled translation pre-initiation complexes, and mediating deubiquitination of 40S ribosome subunits. Deubiquitinates cftr in early endosomes, enhancing its endocytic recycling. In Xenopus tropicalis (Western clawed frog), this protein is Ubiquitin carboxyl-terminal hydrolase 10 (usp10).